The sequence spans 226 residues: MRMNLSELEIRILGCLMEKELATPEIYPLTLNALASACNQKSNRDPVMSVTEADLLRGLEALGARGLARLTTTGGRVAKYCHSATDNLRLAAAERAVLAELMLRGAQTAAELRSRGERMTEMGDIESVEETLRKLQQHGPPLVVRLPRQPGRKEQRYLQVFAGLPEFPDELDISEEMEPAAGPRAAAGRPAVGNERLERLEEGIGSLRQEIAALRREVQEMMDAFA.

Belongs to the UPF0502 family.

This Citrifermentans bemidjiense (strain ATCC BAA-1014 / DSM 16622 / JCM 12645 / Bem) (Geobacter bemidjiensis) protein is UPF0502 protein Gbem_0194.